The chain runs to 692 residues: MAIERITDNKFELVSKYDPAGDQGQAISELVENIENGEKAQILRGATGTGKTYTMSQVIAQTGKPTLVMAHNKTLAGQLYSEFKEFFPNNAVEYFVSYYDYYQPEAYVPSSDTYIEKDSSVNDEIDKLRHSATSSLLERNDVIVVASVSCIYGLGSPKEYQDSVVSLRPGQEISRDQLLNDLVGIQFERNDIDFQRGCFRVRGDVVEVFPASRDEHAFRVEFFGDEIDRIREIEVLTGQVLGEVDHLAIFPATHFMTNDDRMEESIAKIEAELEAQLKVFRSEGKLLEAQRLEQRTNYDIEMLREMGYCNGVENYSRHMDGREEGEPPYTLLDFFPDDFMIMIDESHMTMGQVKGMYNGDRARKEMLCNYGFRLPSALDNRPLKREEFESHVHQIVYVSATPGDYEMEQTDTIVEQIIRPTGLLDPVVEVRPMMGQIDDLVGEIHKRAEKNERVFVTTLTKKMSEDLTAYFKEMGIKVKYMHSDIKTLERTEIIRDLRLGVFDVLVGINLLREGIDVPEVSLVAILDADKEGFLRNERGLIQTIGRAARNSEGHVILYSDMAKALDENDPADKEILDSGYYTEYEGKKYKITRSMKHAMDETARRRDIQMAYNEEHGITPQTIKKEIRDLIAITKKTDSGELEEVDASAMNKKERKALVKKLEKEMQQAAAALDFEGAAQLRDMVLELRAMD.

Positions 32–187 (ENIENGEKAQ…LLNDLVGIQF (156 aa)) constitute a Helicase ATP-binding domain. An ATP-binding site is contributed by 45–52 (GATGTGKT). A Beta-hairpin motif is present at residues 98 to 121 (YYDYYQPEAYVPSSDTYIEKDSSV). A Helicase C-terminal domain is found at 436 to 631 (QIDDLVGEIH…TIKKEIRDLI (196 aa)). The UVR domain maps to 656–691 (KALVKKLEKEMQQAAAALDFEGAAQLRDMVLELRAM).

This sequence belongs to the UvrB family. Forms a heterotetramer with UvrA during the search for lesions. Interacts with UvrC in an incision complex.

It is found in the cytoplasm. Functionally, the UvrABC repair system catalyzes the recognition and processing of DNA lesions. A damage recognition complex composed of 2 UvrA and 2 UvrB subunits scans DNA for abnormalities. Upon binding of the UvrA(2)B(2) complex to a putative damaged site, the DNA wraps around one UvrB monomer. DNA wrap is dependent on ATP binding by UvrB and probably causes local melting of the DNA helix, facilitating insertion of UvrB beta-hairpin between the DNA strands. Then UvrB probes one DNA strand for the presence of a lesion. If a lesion is found the UvrA subunits dissociate and the UvrB-DNA preincision complex is formed. This complex is subsequently bound by UvrC and the second UvrB is released. If no lesion is found, the DNA wraps around the other UvrB subunit that will check the other stand for damage. The sequence is that of UvrABC system protein B from Lactococcus lactis subsp. cremoris (strain MG1363).